The following is a 494-amino-acid chain: Metal cation symporter ZIP14 (494 aa).

A signal peptide spans 1–34; the sequence is MTLRRASGCRQLTLTIGLALTLGLLQWPIGDVRG. Residues 35–152 are Extracellular-facing; it reads QDGASPAQVL…PTEAEVWGYG (118 aa). The chain crosses the membrane as a helical span at residues 153-173; it reads LLCVTVISLCSLVGASVVPFM. Topologically, residues 174–181 are cytoplasmic; the sequence is RKTFYKRL. Residues 182 to 202 form a helical membrane-spanning segment; that stretch reads LLYFIALAIGTLYSNALFQLI. Over 203–219 the chain is Extracellular; it reads PEAFGFDPMEDYYVPKS. The helical transmembrane segment at 220–240 threads the bilayer; the sequence is AVVFGGFYLFFFTEKILKMIL. Over 241-397 the chain is Cytoplasmic; sequence KPKDTGGHGH…LLNAGMSIQQ (157 aa). An HHHGHXHX-motif motif is present at residues 248 to 255; the sequence is HGHGHSHF. Residues 376–381 carry the XEXPHE-motif motif; that stretch reads EEFPHE. A helical transmembrane segment spans residues 398-418; it reads ALFFNFLSACCCYLGMGFGIL. Topologically, residues 419-426 are extracellular; the sequence is AGNNFSPN. The chain crosses the membrane as a helical span at residues 427-447; the sequence is WIFALAGGMFLYIALADMFPE. Residues 448 to 462 lie on the Cytoplasmic side of the membrane; the sequence is MNEVSREEEEAGGSG. Residues 463–483 traverse the membrane as a helical segment; that stretch reads FLLTFALQNAGLLTGFAIMLV. At 484–494 the chain is on the extracellular side; sequence LTIYSGQIQLG.

Belongs to the ZIP transporter (TC 2.A.5) family. In terms of assembly, homotrimer.

Its subcellular location is the cell membrane. The protein resides in the apical cell membrane. It localises to the basolateral cell membrane. It is found in the early endosome membrane. The protein localises to the late endosome membrane. Its subcellular location is the lysosome membrane. It catalyses the reaction Zn(2+)(out) + 2 hydrogencarbonate(out) = Zn(2+)(in) + 2 hydrogencarbonate(in). It carries out the reaction Mn(2+)(out) + 2 hydrogencarbonate(out) = Mn(2+)(in) + 2 hydrogencarbonate(in). The catalysed reaction is Fe(2+)(out) + 2 hydrogencarbonate(out) = Fe(2+)(in) + 2 hydrogencarbonate(in). The enzyme catalyses Cd(2+)(out) + 2 hydrogencarbonate(out) = Cd(2+)(in) + 2 hydrogencarbonate(in). Its function is as follows. Broad-scope metal ion transporter with a preference for zinc uptake. Also mediates cellular uptake of nontransferrin-bound iron. Electroneutral transporter of the plasma membrane mediating the cellular uptake of the divalent metal cations zinc, manganese and iron that are important for tissue homeostasis, metabolism, development and immunity. Functions as an energy-dependent symporter, transporting through the membranes an electroneutral complex composed of a divalent metal cation and two bicarbonate anions. Beside these endogenous cellular substrates, can also import cadmium a non-essential metal which is cytotoxic and carcinogenic. The sequence is that of Metal cation symporter ZIP14 from Danio rerio (Zebrafish).